We begin with the raw amino-acid sequence, 157 residues long: Dihydrofolate reductase type 15 (157 aa).

In terms of domain architecture, DHFR spans 2–156 (KLSLMAAISK…INYSYQIWQK (155 aa)).

Belongs to the dihydrofolate reductase family. In terms of assembly, homodimer.

The catalysed reaction is (6S)-5,6,7,8-tetrahydrofolate + NADP(+) = 7,8-dihydrofolate + NADPH + H(+). It functions in the pathway cofactor biosynthesis; tetrahydrofolate biosynthesis; 5,6,7,8-tetrahydrofolate from 7,8-dihydrofolate: step 1/1. Functionally, key enzyme in folate metabolism. Catalyzes an essential reaction for de novo glycine and purine synthesis, and for DNA precursor synthesis. The chain is Dihydrofolate reductase type 15 (dhfrXV) from Escherichia coli.